Reading from the N-terminus, the 170-residue chain is Adenine phosphoribosyltransferase (170 aa).

The protein belongs to the purine/pyrimidine phosphoribosyltransferase family. In terms of assembly, homodimer.

It is found in the cytoplasm. The catalysed reaction is AMP + diphosphate = 5-phospho-alpha-D-ribose 1-diphosphate + adenine. The protein operates within purine metabolism; AMP biosynthesis via salvage pathway; AMP from adenine: step 1/1. In terms of biological role, catalyzes a salvage reaction resulting in the formation of AMP, that is energically less costly than de novo synthesis. The protein is Adenine phosphoribosyltransferase of Bacillus anthracis (strain A0248).